The chain runs to 43 residues: Metallothionein B (43 aa).

The beta stretch occupies residues 1 to 16 (SCAGSCKCKNCRCRSC). A divalent metal cation-binding residues include Cys2, Cys6, Cys8, Cys11, Cys13, Cys16, Cys20, Cys21, Cys23, Cys24, Cys28, Cys31, Cys35, and Cys37. The tract at residues 17–43 (RKSCCSCCPAGCNNCVKGCVCKEPASS) is alpha.

Belongs to the metallothionein superfamily. Type 1 family.

Metallothioneins have a high content of cysteine residues that bind various heavy metals. This Colinus virginianus (Northern bobwhite) protein is Metallothionein B.